Consider the following 368-residue polypeptide: Phosphoserine aminotransferase (368 aa).

Arg-42 contributes to the L-glutamate binding site. Positions 101, 151, 175, and 198 each coordinate pyridoxal 5'-phosphate. Lys-199 carries the N6-(pyridoxal phosphate)lysine modification. Asn-240 to Thr-241 is a binding site for pyridoxal 5'-phosphate.

The protein belongs to the class-V pyridoxal-phosphate-dependent aminotransferase family. SerC subfamily. In terms of assembly, homodimer. The cofactor is pyridoxal 5'-phosphate.

The protein localises to the cytoplasm. The enzyme catalyses O-phospho-L-serine + 2-oxoglutarate = 3-phosphooxypyruvate + L-glutamate. It catalyses the reaction 4-(phosphooxy)-L-threonine + 2-oxoglutarate = (R)-3-hydroxy-2-oxo-4-phosphooxybutanoate + L-glutamate. It functions in the pathway amino-acid biosynthesis; L-serine biosynthesis; L-serine from 3-phospho-D-glycerate: step 2/3. Its pathway is cofactor biosynthesis; pyridoxine 5'-phosphate biosynthesis; pyridoxine 5'-phosphate from D-erythrose 4-phosphate: step 3/5. Catalyzes the reversible conversion of 3-phosphohydroxypyruvate to phosphoserine and of 3-hydroxy-2-oxo-4-phosphonooxybutanoate to phosphohydroxythreonine. This is Phosphoserine aminotransferase from Polaromonas sp. (strain JS666 / ATCC BAA-500).